Here is a 600-residue protein sequence, read N- to C-terminus: UvrABC system protein C (600 aa).

The region spanning 15–92 (DKPGCYLMKD…IKKYQPYYNV (78 aa)) is the GIY-YIG domain. Residues 197-232 (SQVKQDLTEKMTQASMNLEFERAAEFRDQLKYIEQT) form the UVR domain.

It belongs to the UvrC family. As to quaternary structure, interacts with UvrB in an incision complex.

The protein resides in the cytoplasm. Functionally, the UvrABC repair system catalyzes the recognition and processing of DNA lesions. UvrC both incises the 5' and 3' sides of the lesion. The N-terminal half is responsible for the 3' incision and the C-terminal half is responsible for the 5' incision. The chain is UvrABC system protein C from Lactobacillus gasseri (strain ATCC 33323 / DSM 20243 / BCRC 14619 / CIP 102991 / JCM 1131 / KCTC 3163 / NCIMB 11718 / NCTC 13722 / AM63).